Reading from the N-terminus, the 210-residue chain is Riboflavin kinase (210 aa).

The tract at residues Met1–Ser81 is H-T-H motif-like. The interval Ile82–Leu210 is riboflavin kinase. A CDP-binding site is contributed by Gly91–Ala96. Thr120 and Asn122 together coordinate Mg(2+). FMN contacts are provided by Thr177 and Glu185. Position 190–193 (Val190–Arg193) interacts with CDP.

Belongs to the archaeal riboflavin kinase family. Mg(2+) serves as cofactor.

The enzyme catalyses riboflavin + CTP = CDP + FMN + H(+). It participates in cofactor biosynthesis; FMN biosynthesis; FMN from riboflavin (CTP route): step 1/1. Functionally, catalyzes the CTP-dependent phosphorylation of riboflavin (vitamin B2) to form flavin mononucleotide (FMN). This Pyrobaculum arsenaticum (strain DSM 13514 / JCM 11321 / PZ6) protein is Riboflavin kinase (ribK).